Consider the following 262-residue polypeptide: Kallikrein-1 (262 aa).

An N-terminal signal peptide occupies residues 1–18 (MWFLVLCLALSLGGTGAA). Residues 19-24 (PPIQSR) constitute a propeptide, activation peptide. The Peptidase S1 domain maps to 25-259 (IVGGWECEQH…YVKWIEDTIA (235 aa)). Cystine bridges form between C31–C174, C50–C66, C153–C220, C185–C199, and C210–C235. H65 (charge relay system) is an active-site residue. The O-linked (GalNAc...) serine glycan is linked to S93. The N-linked (GlcNAc...) asparagine glycan is linked to N102. S104 is a glycosylation site (O-linked (GalNAc...) serine). N108 carries an N-linked (GlcNAc...) asparagine glycan. D120 acts as the Charge relay system in catalysis. The N-linked (GlcNAc...) asparagine; partial glycan is linked to N165. S167 is a glycosylation site (O-linked (GalNAc...) serine). S214 functions as the Charge relay system in the catalytic mechanism.

It belongs to the peptidase S1 family. Kallikrein subfamily. Post-translationally, the O-linked polysaccharides on Ser-93, Ser-104 and Ser-167 are probably the mucin type linked to GalNAc. In PubMed:3163150, GalNAc was detected with the corresponding peptides but not located. Isoform 2 is expressed in pancreas, salivary glands, kidney, colon, prostate gland, testis, spleen and the colon adenocarcinoma cell line T84.

The enzyme catalyses Preferential cleavage of Arg-|-Xaa bonds in small molecule substrates. Highly selective action to release kallidin (lysyl-bradykinin) from kininogen involves hydrolysis of Met-|-Xaa or Leu-|-Xaa.. Glandular kallikreins cleave Met-Lys and Arg-Ser bonds in kininogen to release Lys-bradykinin. Its function is as follows. (Microbial infection) Cleaves Neisseria meningitidis NHBA in saliva; Neisseria is an obligate commensal of the nasopharyngeal mucosa. This is Kallikrein-1 (KLK1) from Homo sapiens (Human).